Reading from the N-terminus, the 330-residue chain is Pantothenate kinase (330 aa).

108–115 serves as a coordination point for ATP; it reads GSVAVGKS.

It belongs to the prokaryotic pantothenate kinase family.

The protein localises to the cytoplasm. The catalysed reaction is (R)-pantothenate + ATP = (R)-4'-phosphopantothenate + ADP + H(+). The protein operates within cofactor biosynthesis; coenzyme A biosynthesis; CoA from (R)-pantothenate: step 1/5. The polypeptide is Pantothenate kinase (Allorhizobium ampelinum (strain ATCC BAA-846 / DSM 112012 / S4) (Agrobacterium vitis (strain S4))).